Here is a 110-residue protein sequence, read N- to C-terminus: UPF0102 protein Abu_0255 (110 aa).

The protein belongs to the UPF0102 family.

The chain is UPF0102 protein Abu_0255 from Aliarcobacter butzleri (strain RM4018) (Arcobacter butzleri).